Consider the following 463-residue polypeptide: Mitochondrial dynamics protein MID51 (463 aa).

The Mitochondrial intermembrane segment spans residues 1 to 23 (MAGAGERKGKKDDNGIGTAIDFV). Residues 24–46 (LSNARLVLGVGGAAMLGIATLAV) traverse the membrane as a helical segment. The Cytoplasmic segment spans residues 47–463 (KRMYDRAISA…LSEPEVLLQT (417 aa)). Positions 49–195 (MYDRAISAPT…LSGSLYDDLQ (147 aa)) are dimerization. Phosphoserine is present on residues S55, S59, S79, and S94. A disordered region spans residues 57–77 (PTSPTRLSHSGKRSWEEPNWM). The interval 160-169 (AAVDICAELR) is important for interaction with DNM1L. 3 residues coordinate ADP: S187, S189, and H201. Residues 234 to 243 (RRENPEYFPR) are important for interaction with DNM1L. S340, R342, and K368 together coordinate ADP.

Belongs to the MID49/MID51 family. In terms of assembly, homodimer. Interacts with DNM1L.

The protein localises to the mitochondrion outer membrane. Functionally, mitochondrial outer membrane protein which regulates mitochondrial fission/fusion dynamics. Promotes the recruitment and association of the fission mediator dynamin-related protein 1 (DNM1L) to the mitochondrial surface independently of the mitochondrial fission FIS1 and MFF proteins. Regulates DNM1L GTPase activity and DNM1L oligomerization. Binds ADP and can also bind GDP, although with lower affinity. Does not bind CDP, UDP, ATP, AMP or GTP. Inhibits DNM1L GTPase activity in the absence of bound ADP. Requires ADP to stimulate DNM1L GTPase activity and the assembly of DNM1L into long, oligomeric tubules with a spiral pattern, as opposed to the ring-like DNM1L oligomers observed in the absence of bound ADP. Does not require ADP for its function in recruiting DNM1L. The polypeptide is Mitochondrial dynamics protein MID51 (Mief1) (Rattus norvegicus (Rat)).